Here is a 403-residue protein sequence, read N- to C-terminus: Putative glutamate--cysteine ligase 2 (403 aa).

Residues 370-403 (ESAAQRRAPQAARRRIRASSEPLGPMSMWPERLH) form a disordered region.

This sequence belongs to the glutamate--cysteine ligase type 2 family. YbdK subfamily.

The catalysed reaction is L-cysteine + L-glutamate + ATP = gamma-L-glutamyl-L-cysteine + ADP + phosphate + H(+). Functionally, ATP-dependent carboxylate-amine ligase which exhibits weak glutamate--cysteine ligase activity. The sequence is that of Putative glutamate--cysteine ligase 2 from Bordetella avium (strain 197N).